The primary structure comprises 365 residues: 3-isopropylmalate dehydrogenase (365 aa).

Positions 96, 106, 134, and 224 each coordinate substrate. Positions 224, 248, and 252 each coordinate Mg(2+). Residue 288–300 (GSAPTIAKQNIAN) coordinates NAD(+).

It belongs to the isocitrate and isopropylmalate dehydrogenases family. LeuB type 1 subfamily. As to quaternary structure, homodimer. Requires Mg(2+) as cofactor. The cofactor is Mn(2+).

It is found in the cytoplasm. The enzyme catalyses (2R,3S)-3-isopropylmalate + NAD(+) = 4-methyl-2-oxopentanoate + CO2 + NADH. The protein operates within amino-acid biosynthesis; L-leucine biosynthesis; L-leucine from 3-methyl-2-oxobutanoate: step 3/4. Catalyzes the oxidation of 3-carboxy-2-hydroxy-4-methylpentanoate (3-isopropylmalate) to 3-carboxy-4-methyl-2-oxopentanoate. The product decarboxylates to 4-methyl-2 oxopentanoate. The chain is 3-isopropylmalate dehydrogenase from Dehalococcoides mccartyi (strain CBDB1).